A 619-amino-acid chain; its full sequence is MDDQQALNSIMQDLAVLHKASRPALSLQETRKAKPSSPKKQNDVRVKFEHRGEKRILQVTRPVKLEDLRSKSKIAFGQSMDLHYTNNELVIPLTTQDDLDKAVELLDRSIHMKSLKILLVVNGSTQATNLEPSPSPEDLNNTPLGAERKKRLSVVGPPNRDRSSPPPGYIPDILHQIARNGSFTSINSEGEFIPESMDQMLDPLSLSSPENSGSGSCPSLDSPLDGESYPKSRMPRAQSYPDNHQEFTDYDNPIFEKFGKGGTYPRRYHVSYHHQEYNDGRKTFPRARRTQGTSFRSPVSFSPTDHSLSTSSGSSVFTPEYDDSRIRRRGSDIDNPTLTVTDISPPSRSPRAPTNWRLGKLLGQGAFGRVYLCYDVDTGRELAVKQVQFNPESPETSKEVNALECEIQLLKNLLHERIVQYYGCLRDPQEKTLSIFMELSPGGSIKDQLKAYGALTENVTRKYTRQILEGVHYLHSNMIVHRDIKGANILRDSTGNIKLGDFGASKRLQTICLSGTGMKSVTGTPYWMSPEVISGEGYGRKADIWSVACTVVEMLTEKPPWAEFEAMAAIFKIATQPTNPKLPPHVSDYTRDFLKRIFVEAKLRPSAEELLRHMFVHYH.

Disordered stretches follow at residues 25–44 (LSLQ…QNDV), 126–168 (QATN…PPPG), 201–245 (LDPL…DNHQ), and 289–355 (RTQG…APTN). Residue serine 26 is modified to Phosphoserine. The PB1 domain maps to 43–122 (DVRVKFEHRG…KSLKILLVVN (80 aa)). Over residues 126 to 143 (QATNLEPSPSPEDLNNTP) the composition is skewed to polar residues. Residues serine 153 and serine 164 each carry the phosphoserine modification. The segment covering 203 to 219 (PLSLSSPENSGSGSCPS) has biased composition (low complexity). Residues serine 239, serine 297, serine 311, serine 331, serine 344, and serine 349 each carry the phosphoserine modification. The segment covering 290–299 (TQGTSFRSPV) has biased composition (polar residues). Residues 300-315 (SFSPTDHSLSTSSGSS) show a composition bias toward low complexity. Basic and acidic residues predominate over residues 322 to 332 (DDSRIRRRGSD). Over residues 336 to 346 (PTLTVTDISPP) the composition is skewed to polar residues. A Protein kinase domain is found at 356-616 (WRLGKLLGQG…AEELLRHMFV (261 aa)). Residues 362 to 370 (LGQGAFGRV) and lysine 385 contribute to the ATP site. Residue aspartate 483 is the Proton acceptor of the active site.

The protein belongs to the protein kinase superfamily. STE Ser/Thr protein kinase family. MAP kinase kinase kinase subfamily. As to quaternary structure, self-associates. Binds both upstream activators and downstream substrates in multimolecular complexes. Interacts (via the kinase catalytic domain) with STK38. Interacts with XIAP/BIRC4. The cofactor is Mg(2+). Post-translationally, ubiquitination by XIAP/BIRC4 does not lead to proteasomal degradation. In terms of processing, autophosphorylated.

The protein resides in the cytoplasm. It localises to the nucleus. It catalyses the reaction L-seryl-[protein] + ATP = O-phospho-L-seryl-[protein] + ADP + H(+). It carries out the reaction L-threonyl-[protein] + ATP = O-phospho-L-threonyl-[protein] + ADP + H(+). Its activity is regulated as follows. Activated by phosphorylation on Thr-524. Interacts with PKN2; the interaction activates PKN2 kinase activity in a MAP3K2-independent kinase activity. Its function is as follows. Component of a protein kinase signal transduction cascade. Regulates the JNK and ERK5 pathways by phosphorylating and activating MAP2K5 and MAP2K7. Plays a role in caveolae kiss-and-run dynamics. This is Mitogen-activated protein kinase kinase kinase 2 (Map3k2) from Mus musculus (Mouse).